Consider the following 275-residue polypeptide: Diaminopimelate epimerase (275 aa).

The substrate site is built by Asn-13, Gln-46, and Asn-66. Cys-75 (proton donor) is an active-site residue. Substrate is bound by residues 76-77 (GN), Asn-159, Asn-192, and 210-211 (ER). The active-site Proton acceptor is Cys-219. 220–221 (GS) contacts substrate.

Belongs to the diaminopimelate epimerase family. Homodimer.

It is found in the cytoplasm. The enzyme catalyses (2S,6S)-2,6-diaminopimelate = meso-2,6-diaminopimelate. It functions in the pathway amino-acid biosynthesis; L-lysine biosynthesis via DAP pathway; DL-2,6-diaminopimelate from LL-2,6-diaminopimelate: step 1/1. Catalyzes the stereoinversion of LL-2,6-diaminopimelate (L,L-DAP) to meso-diaminopimelate (meso-DAP), a precursor of L-lysine and an essential component of the bacterial peptidoglycan. This chain is Diaminopimelate epimerase, found in Idiomarina loihiensis (strain ATCC BAA-735 / DSM 15497 / L2-TR).